A 602-amino-acid polypeptide reads, in one-letter code: ATP-dependent zinc metalloprotease FtsH 3 (602 aa).

The Cytoplasmic portion of the chain corresponds to 1 to 18 (MNSWFLQVSKRLGPAGRR). The helical transmembrane segment at 19-39 (LWLLGFMGVVLAVTLGLALRA) threads the bilayer. Over 40-117 (ARESATQRTA…DFASREDPSR (78 aa)) the chain is Periplasmic. The helical transmembrane segment at 118–138 (AASAVLPVVVLAAVGFALFTV) threads the bilayer. The Cytoplasmic portion of the chain corresponds to 139 to 602 (SRRRSPKVFS…RRPRPEDQAA (464 aa)). An ATP-binding site is contributed by 202–209 (GEPGTGKT). Position 425 (histidine 425) interacts with Zn(2+). Glutamate 426 is an active-site residue. Histidine 429 and aspartate 501 together coordinate Zn(2+).

This sequence in the central section; belongs to the AAA ATPase family. It in the C-terminal section; belongs to the peptidase M41 family. In terms of assembly, homohexamer. It depends on Zn(2+) as a cofactor.

The protein localises to the cell inner membrane. Its function is as follows. Acts as a processive, ATP-dependent zinc metallopeptidase for both cytoplasmic and membrane proteins. Plays a role in the quality control of integral membrane proteins. The chain is ATP-dependent zinc metalloprotease FtsH 3 from Sorangium cellulosum (strain So ce56) (Polyangium cellulosum (strain So ce56)).